A 185-amino-acid chain; its full sequence is Ribosome-recycling factor (185 aa).

The interval 137–162 (DSIDKMVKDGEVGEDEGRRAEKELDD) is disordered.

Belongs to the RRF family.

The protein resides in the cytoplasm. Functionally, responsible for the release of ribosomes from messenger RNA at the termination of protein biosynthesis. May increase the efficiency of translation by recycling ribosomes from one round of translation to another. This is Ribosome-recycling factor from Streptomyces coelicolor (strain ATCC BAA-471 / A3(2) / M145).